The following is a 197-amino-acid chain: Peptidyl-tRNA hydrolase (197 aa).

Tyr18 serves as a coordination point for tRNA. His23 functions as the Proton acceptor in the catalytic mechanism. 3 residues coordinate tRNA: Phe69, Asn71, and Asn117.

This sequence belongs to the PTH family. In terms of assembly, monomer.

The protein resides in the cytoplasm. It catalyses the reaction an N-acyl-L-alpha-aminoacyl-tRNA + H2O = an N-acyl-L-amino acid + a tRNA + H(+). Hydrolyzes ribosome-free peptidyl-tRNAs (with 1 or more amino acids incorporated), which drop off the ribosome during protein synthesis, or as a result of ribosome stalling. Functionally, catalyzes the release of premature peptidyl moieties from peptidyl-tRNA molecules trapped in stalled 50S ribosomal subunits, and thus maintains levels of free tRNAs and 50S ribosomes. The protein is Peptidyl-tRNA hydrolase of Tolumonas auensis (strain DSM 9187 / NBRC 110442 / TA 4).